Here is a 596-residue protein sequence, read N- to C-terminus: Transketolase-like protein 1 (596 aa).

Residue H46 participates in substrate binding. Thiamine diphosphate-binding positions include S49 and 94–96 (GWL). A Mg(2+)-binding site is contributed by D126. Positions 127 and 156 each coordinate thiamine diphosphate. N156 and L158 together coordinate Mg(2+). Residues K218 and H232 each coordinate thiamine diphosphate. Substrate is bound by residues H232, R292, and S319. Residues E340 and F366 each coordinate thiamine diphosphate. E340 serves as the catalytic Proton donor. H390 and D398 together coordinate substrate. Q402 provides a ligand contact to thiamine diphosphate. Position 448 (R448) interacts with substrate.

It belongs to the transketolase family. In terms of assembly, homodimer. Mg(2+) is required as a cofactor. It depends on Ca(2+) as a cofactor. Requires Mn(2+) as cofactor. Co(2+) serves as cofactor. The cofactor is thiamine diphosphate. As to expression, widely expressed. Expressed in endothelial cells and in peripheral neurons (at protein level). In terms of tissue distribution, not expressed in fetal neocortex. Expressed in fetal neocortex.

The protein localises to the cytoplasm. It carries out the reaction D-sedoheptulose 7-phosphate + D-glyceraldehyde 3-phosphate = aldehydo-D-ribose 5-phosphate + D-xylulose 5-phosphate. In terms of biological role, catalyzes the transfer of a two-carbon ketol group from a ketose donor to an aldose acceptor, via a covalent intermediate with the cofactor thiamine pyrophosphate. Its function is as follows. During fetal neocortex development, may be essential to maintain the full number of basal radial glia (bRG). bRG are neural progenitor cells that undergo asymmetric divisions, generating a bRG (self-renewal) and a neuron, in contrast to basal intermediate progenitors (bIPs), which typically divide once to give rise to 2 neurons. bRG generate more cortical neurons over time than bIPs. This is Transketolase-like protein 1 (TKTL1) from Homo sapiens (Human).